The sequence spans 50 residues: DNA replication protein repEA (50 aa).

Functionally, involved in T4 DNA replication. Binds to ssDNA. This chain is DNA replication protein repEA (repEA), found in Enterobacteria phage T4 (Bacteriophage T4).